A 719-amino-acid chain; its full sequence is Glycine--tRNA ligase beta subunit (719 aa).

The segment at 65–84 is disordered; sequence PDREEEIKGPPAKAAFKDGK.

This sequence belongs to the class-II aminoacyl-tRNA synthetase family. Tetramer of two alpha and two beta subunits.

The protein resides in the cytoplasm. The enzyme catalyses tRNA(Gly) + glycine + ATP = glycyl-tRNA(Gly) + AMP + diphosphate. This is Glycine--tRNA ligase beta subunit from Trichodesmium erythraeum (strain IMS101).